A 297-amino-acid polypeptide reads, in one-letter code: Protein BCCIP homolog (297 aa).

The tract at residues 1–40 (MSANKQKKLSTMEVDPNEDVSSSSEDDDDDEPHPDAYKGN) is disordered.

Belongs to the BCP1 family.

The chain is Protein BCCIP homolog from Drosophila melanogaster (Fruit fly).